A 339-amino-acid polypeptide reads, in one-letter code: DNA-directed RNA polymerase subunit alpha (339 aa).

Positions 1–235 are alpha N-terminal domain (alpha-NTD); that stretch reads MVLQKNWQSL…DQLQLFINFD (235 aa). An alpha C-terminal domain (alpha-CTD) region spans residues 251 to 339; that stretch reads FNRNLLRKVD…DLAKRLDEPF (89 aa).

The protein belongs to the RNA polymerase alpha chain family. As to quaternary structure, homodimer. The RNAP catalytic core consists of 2 alpha, 1 beta, 1 beta' and 1 omega subunit. When a sigma factor is associated with the core the holoenzyme is formed, which can initiate transcription.

The enzyme catalyses RNA(n) + a ribonucleoside 5'-triphosphate = RNA(n+1) + diphosphate. In terms of biological role, DNA-dependent RNA polymerase catalyzes the transcription of DNA into RNA using the four ribonucleoside triphosphates as substrates. The sequence is that of DNA-directed RNA polymerase subunit alpha from Gluconacetobacter diazotrophicus (strain ATCC 49037 / DSM 5601 / CCUG 37298 / CIP 103539 / LMG 7603 / PAl5).